Here is a 150-residue protein sequence, read N- to C-terminus: Endoribonuclease YbeY (150 aa).

The Zn(2+) site is built by His116, His120, and His126.

This sequence belongs to the endoribonuclease YbeY family. The cofactor is Zn(2+).

The protein localises to the cytoplasm. Functionally, single strand-specific metallo-endoribonuclease involved in late-stage 70S ribosome quality control and in maturation of the 3' terminus of the 16S rRNA. The chain is Endoribonuclease YbeY from Mesomycoplasma hyopneumoniae (strain 232) (Mycoplasma hyopneumoniae).